Reading from the N-terminus, the 393-residue chain is Cysteine protease ATG4B (393 aa).

M1 carries the post-translational modification N-acetylmethionine. At S34 the chain carries Phosphoserine. Catalysis depends on C74, which acts as the Nucleophile. C189 is subject to S-nitrosocysteine. Catalysis depends on residues D278 and H280. S-nitrosocysteine occurs at positions 292 and 301. A disulfide bridge connects residues C292 and C361. Phosphoserine is present on residues S316 and S383. Positions F388 to L391 match the LIR motif. S392 is modified (phosphoserine).

Belongs to the peptidase C54 family. Interacts with PFKP; promoting phosphorylation of ATG4B at Ser-34. Interacts with GBP7. Phosphorylation at Ser-383 and Ser-392 promotes autophagy by increasing protein delipidation activity without affecting proteolytic activation of ATG8 proteins. Phosphorylation at Ser-316 by ULK1 inhibits autophagy by decreasing both proteolytic activation and delipidation activities. Phosphorylation at Ser-316 is dephosphorylated by protein phosphatase 2A (PP2A). Phosphorylation at Ser-34 by AKT2 promotes its hydrolase activity, leading to increased proteolytic activation and delipidation of ATG8 family proteins. Phosphorylation at Ser-34 by AKT1 promotes mitochondrial localization and inhibition of the F1F0-ATP synthase activity, leading to elevation of mitochondrial reactive oxygen species (ROS). In terms of processing, ubiquitinated by RNF5, leading to its degradation by the proteasome. Post-translationally, S-nitrosylation at Cys-189 and Cys-292 in response to high glucose decreases both proteolytic activation and delipidation activities. O-glycosylated by OGT, leading to increase protease activity, thereby promoting the proteolytic activation of ATG8 family proteins. In terms of processing, forms reversible intrachain disulfide bonds in response to oxidative stress. Forms interchain disulfide bonds, leading to formation of homooligomers in response to oxidation.

The protein resides in the cytoplasm. It is found in the cytosol. The protein localises to the cytoplasmic vesicle. Its subcellular location is the autophagosome. It localises to the endoplasmic reticulum. The protein resides in the mitochondrion. It catalyses the reaction [protein]-C-terminal L-amino acid-glycyl-phosphatidylethanolamide + H2O = [protein]-C-terminal L-amino acid-glycine + a 1,2-diacyl-sn-glycero-3-phosphoethanolamine. The catalysed reaction is [protein]-C-terminal L-amino acid-glycyl-phosphatidylserine + H2O = [protein]-C-terminal L-amino acid-glycine + a 1,2-diacyl-sn-glycero-3-phospho-L-serine. With respect to regulation, inhibited by N-ethylmaleimide. Redox-regulated during autophagy since reducing conditions activate ATG4A whereas an oxidizing environment such as the presence of H(2)O(2) inhibits its activity. The cysteine protease activity compounds is inhibited by styrylquinoline compounds 4-28 and LV-320. Its function is as follows. Cysteine protease that plays a key role in autophagy by mediating both proteolytic activation and delipidation of ATG8 family proteins. Required for canonical autophagy (macroautophagy), non-canonical autophagy as well as for mitophagy. The protease activity is required for proteolytic activation of ATG8 family proteins: cleaves the C-terminal amino acid of ATG8 proteins MAP1LC3A, MAP1LC3B, MAP1LC3C, GABARAPL1, GABARAPL2 and GABARAP, to reveal a C-terminal glycine. Exposure of the glycine at the C-terminus is essential for ATG8 proteins conjugation to phosphatidylethanolamine (PE) and insertion to membranes, which is necessary for autophagy. Protease activity is also required to counteract formation of high-molecular weight conjugates of ATG8 proteins (ATG8ylation): acts as a deubiquitinating-like enzyme that removes ATG8 conjugated to other proteins, such as ATG3. In addition to the protease activity, also mediates delipidation of ATG8 family proteins. Catalyzes delipidation of PE-conjugated forms of ATG8 proteins during macroautophagy. Also involved in non-canonical autophagy, a parallel pathway involving conjugation of ATG8 proteins to single membranes at endolysosomal compartments, by catalyzing delipidation of ATG8 proteins conjugated to phosphatidylserine (PS). Compared to other members of the family (ATG4A, ATG4C or ATG4C), constitutes the major protein for proteolytic activation of ATG8 proteins, while it displays weaker delipidation activity than other ATG4 paralogs. Involved in phagophore growth during mitophagy independently of its protease activity and of ATG8 proteins: acts by regulating ATG9A trafficking to mitochondria and promoting phagophore-endoplasmic reticulum contacts during the lipid transfer phase of mitophagy. In terms of biological role, (Microbial infection) Mediates cleavage of an ATG8 protein homolog coded in the genome of cytopathogenic bovine viral diarrhea virus (BVDV). The polypeptide is Cysteine protease ATG4B (ATG4B) (Bos taurus (Bovine)).